The primary structure comprises 310 residues: Probable manganese-dependent inorganic pyrophosphatase (310 aa).

Residues His9, Asp13, Asp15, Asp75, His97, and Asp149 each contribute to the Mn(2+) site.

Belongs to the PPase class C family. Mn(2+) serves as cofactor.

The protein localises to the cytoplasm. The enzyme catalyses diphosphate + H2O = 2 phosphate + H(+). The chain is Probable manganese-dependent inorganic pyrophosphatase from Brevibacillus brevis (strain 47 / JCM 6285 / NBRC 100599).